The sequence spans 337 residues: Phenylalanine--tRNA ligase alpha subunit (337 aa).

E252 contributes to the Mg(2+) binding site.

The protein belongs to the class-II aminoacyl-tRNA synthetase family. Phe-tRNA synthetase alpha subunit type 1 subfamily. In terms of assembly, tetramer of two alpha and two beta subunits. Mg(2+) serves as cofactor.

It localises to the cytoplasm. It carries out the reaction tRNA(Phe) + L-phenylalanine + ATP = L-phenylalanyl-tRNA(Phe) + AMP + diphosphate + H(+). This is Phenylalanine--tRNA ligase alpha subunit from Saccharophagus degradans (strain 2-40 / ATCC 43961 / DSM 17024).